The sequence spans 2283 residues: AT-rich interactive domain-containing protein 1A (2283 aa).

The segment covering 1 to 10 (MAAQVAPAAA) has biased composition (low complexity). Disordered regions lie at residues 1–333 (MAAQ…PADM), 346–822 (AAAA…LPNA), and 979–1006 (ATKMNNKADGTPKTESKSKKSSSSTTTN). A2 carries the post-translational modification N-acetylalanine. The span at 22–34 (ELKKAEQQQREEA) shows a compositional bias: basic and acidic residues. 2 positions are modified to phosphoserine: S56 and S77. The segment covering 77–93 (SNGGGGGGGAGSGGGPG) has biased composition (gly residues). Composition is skewed to low complexity over residues 128-143 (SSSDGVGAPPHSAAAA) and 233-266 (SSPRGGTPGSGAAAAAGSKPPPSSSASASSSSSS). Residue S234 is modified to Phosphoserine. A compositionally biased stretch (gly residues) spans 274 to 287 (AMGGGGPSAAGGGT). T287 carries the post-translational modification Phosphothreonine. Positions 296–300 (LNQLL) match the LXXLL motif. The span at 296 to 307 (LNQLLTSPSSAR) shows a compositional bias: polar residues. A Phosphoserine modification is found at S302. Positions 311–328 (GYPGGDYGGGPQDGGAGK) are enriched in gly residues. Phosphoserine occurs at positions 365 and 384. Residues 402 to 427 (PYSQQQGPPSGPQQGHGYPGQPYGSQ) show a composition bias toward low complexity. R431 carries the post-translational modification Asymmetric dimethylarginine. Polar residues-rich tracts occupy residues 438–451 (GRAQSAMGSLSYAQ) and 459–470 (QGPSAYGQQGQT). Composition is skewed to low complexity over residues 471-547 (PYYN…QHPQ) and 554-596 (QPQA…YSQQ). At S605 the chain carries Phosphoserine. Positions 611-622 (SQASSAPSMTSS) are enriched in low complexity. Residues 629–638 (MNLSLQSRPS) are compositionally biased toward polar residues. Residues 659–675 (SPGVSTSGISSSQGEQS) are compositionally biased toward low complexity. Positions 676–686 (NPAQSPFSPHT) are enriched in polar residues. S697, S699, S703, S731, S765, and S773 each carry phosphoserine. 2 stretches are compositionally biased toward polar residues: residues 731–748 (SGQSDSIMHPSMNQSSIA) and 756–794 (RNPQMPQYTSPQPGSALSPRQPSGGQMHSGVGSYQQNSM). The span at 795-822 (GSYGPQGSQYGPQGGYPRQPNYNALPNA) shows a compositional bias: low complexity. Residues 1018-1109 (EPERKMWVDR…CLYAFECKIE (92 aa)) enclose the ARID domain. Disordered regions lie at residues 1114 to 1484 (PPPD…MMGG) and 1539 to 1636 (RANH…PPMI). Residues 1142 to 1155 (MQGPQTPQSTSSSM) are compositionally biased toward low complexity. The span at 1163-1178 (PPTPASTPHSQIPPLP) shows a compositional bias: pro residues. Residue S1185 is modified to Phosphoserine. Polar residues predominate over residues 1198–1220 (PTFQKRNSMTPNPGYQPSMNTSD). S1236 is modified (phosphoserine). An Omega-N-methylarginine modification is found at R1277. Low complexity predominate over residues 1343 to 1368 (QFSTQGTPSSSPFPSQQTTMYQQQQQ). Residues 1369–1388 (NYKRPMDGTYGPPAKRHEGE) carry the Nuclear localization signal motif. Positions 1395–1426 (SAGQGQPQQQQLPAAQSQPASQPQAAQPSPQQ) are enriched in low complexity. Polar residues-rich tracts occupy residues 1427–1436 (DVYNQYSNAY) and 1469–1478 (PGSSAQQNMP). Residues 1555–1579 (PYGPSAPVPPMTRPPPSNYQPPPSM) show a composition bias toward pro residues. Residue S1605 is modified to Phosphoserine. Position 1613 is an N6-acetyllysine (K1613). The short motif at 1710–1714 (LPGLL) is the LXXLL element. Disordered stretches follow at residues 1757-1782 (PAHTEEEEEEHLDPKLEEEEEEGVGN), 1872-1904 (CPTPPRKHLTTVEGTPGTTEQEGPPPDGLPEKR), and 1917-1941 (SSTLTDEGAKSAEATKESSKFPFGI). Acidic residues predominate over residues 1761–1782 (EEEEEEHLDPKLEEEEEEGVGN). T1874 and T1886 each carry phosphothreonine. Positions 1882-1893 (TVEGTPGTTEQE) are enriched in low complexity. Position 1903 is an N6-acetyllysine (K1903). Positions 1923 to 1935 (EGAKSAEATKESS) are enriched in basic and acidic residues. Residues S1927 and S1942 each carry the phosphoserine modification. 2 short sequence motifs (LXXLL) span residues 1965–1969 (LCTLL) and 2083–2087 (LDGLL).

Component of SWI/SNF chromatin remodeling complexes, in some of which it can be mutually exclusive with ARID1B/BAF250B. The canonical complex contains a catalytic subunit (either SMARCA4/BRG1/BAF190A or SMARCA2/BRM/BAF190B) and at least SMARCE1, ACTL6A/BAF53, SMARCC1/BAF155, SMARCC2/BAF170, and SMARCB1/SNF5/BAF47. Other subunits specific to each of the complexes may also be present permitting several possible combinations developmentally and tissue specific. Component of the BAF (SWI/SNF-A) complex, which includes at least actin (ACTB), ARID1A/BAF250A, ARID1B/BAF250B, SMARCA2/BRM, SMARCA4/BRG1/BAF190A, ACTL6A/BAF53, ACTL6B/BAF53B, SMARCE1/BAF57, SMARCC1/BAF155, SMARCC2/BAF170, SMARCB1/SNF5/INI1, and one or more SMARCD1/BAF60A, SMARCD2/BAF60B, or SMARCD3/BAF60C. In muscle cells, the BAF complex also contains DPF3. Component of neural progenitors-specific chromatin remodeling complex (npBAF complex) composed of at least, ARID1A/BAF250A or ARID1B/BAF250B, SMARCD1/BAF60A, SMARCD3/BAF60C, SMARCA2/BRM/BAF190B, SMARCA4/BRG1/BAF190A, SMARCB1/BAF47, SMARCC1/BAF155, SMARCE1/BAF57, SMARCC2/BAF170, PHF10/BAF45A, ACTL6A/BAF53A and actin. Component of neuron-specific chromatin remodeling complex (nBAF complex) composed of at least, ARID1A/BAF250A or ARID1B/BAF250B, SMARCD1/BAF60A, SMARCD3/BAF60C, SMARCA2/BRM/BAF190B, SMARCA4/BRG1/BAF190A, SMARCB1/BAF47, SMARCC1/BAF155, SMARCE1/BAF57, SMARCC2/BAF170, DPF1/BAF45B, DPF3/BAF45C, ACTL6B/BAF53B and actin. Component of a SWI/SNF-like EBAFa complex, at least composed of SMARCA4/BRG1/BAF190A, SMARCB1/BAF47/SNF5, ACTL6A/BAF53A, SMARCE1/BAF57, SMARCD1/BAF60A, SMARCC1/BAF155, SMARCC2/BAF170, BAF250A and MLLT1/ENL. Interacts through its C-terminus with SMARCA2/BRM/BAF190B and SMARCA4/BRG1/BAF190A. Interacts with SMARCC1/BAF155. Interacts with FOS (via bZIP domain and leucine-zipper region), FOSB isoform 1 and 2, FOSL1 and FOSL2. Widely expressed. Expressed at high levels in the testis.

It is found in the nucleus. Functionally, involved in transcriptional activation and repression of select genes by chromatin remodeling (alteration of DNA-nucleosome topology). Component of SWI/SNF chromatin remodeling complexes that carry out key enzymatic activities, changing chromatin structure by altering DNA-histone contacts within a nucleosome in an ATP-dependent manner. Binds DNA non-specifically. Belongs to the neural progenitors-specific chromatin remodeling complex (npBAF complex) and the neuron-specific chromatin remodeling complex (nBAF complex). During neural development a switch from a stem/progenitor to a postmitotic chromatin remodeling mechanism occurs as neurons exit the cell cycle and become committed to their adult state. The transition from proliferating neural stem/progenitor cells to postmitotic neurons requires a switch in subunit composition of the npBAF and nBAF complexes. As neural progenitors exit mitosis and differentiate into neurons, npBAF complexes which contain ACTL6A/BAF53A and PHF10/BAF45A, are exchanged for homologous alternative ACTL6B/BAF53B and DPF1/BAF45B or DPF3/BAF45C subunits in neuron-specific complexes (nBAF). The npBAF complex is essential for the self-renewal/proliferative capacity of the multipotent neural stem cells. The nBAF complex along with CREST plays a role regulating the activity of genes essential for dendrite growth. The chain is AT-rich interactive domain-containing protein 1A (Arid1a) from Mus musculus (Mouse).